The primary structure comprises 420 residues: Gamma-glutamyl phosphate reductase (420 aa).

This sequence belongs to the gamma-glutamyl phosphate reductase family.

It is found in the cytoplasm. The enzyme catalyses L-glutamate 5-semialdehyde + phosphate + NADP(+) = L-glutamyl 5-phosphate + NADPH + H(+). It participates in amino-acid biosynthesis; L-proline biosynthesis; L-glutamate 5-semialdehyde from L-glutamate: step 2/2. Its function is as follows. Catalyzes the NADPH-dependent reduction of L-glutamate 5-phosphate into L-glutamate 5-semialdehyde and phosphate. The product spontaneously undergoes cyclization to form 1-pyrroline-5-carboxylate. This is Gamma-glutamyl phosphate reductase from Acidiphilium cryptum (strain JF-5).